A 376-amino-acid chain; its full sequence is Aminomethyltransferase (376 aa).

This sequence belongs to the GcvT family. The glycine cleavage system is composed of four proteins: P, T, L and H.

It catalyses the reaction N(6)-[(R)-S(8)-aminomethyldihydrolipoyl]-L-lysyl-[protein] + (6S)-5,6,7,8-tetrahydrofolate = N(6)-[(R)-dihydrolipoyl]-L-lysyl-[protein] + (6R)-5,10-methylene-5,6,7,8-tetrahydrofolate + NH4(+). Its function is as follows. The glycine cleavage system catalyzes the degradation of glycine. This is Aminomethyltransferase from Nostoc sp. (strain PCC 7120 / SAG 25.82 / UTEX 2576).